Consider the following 384-residue polypeptide: Protein V (384 aa).

2 disordered regions span residues 1–23 (MDQDAFILKEDSEVEREAPGGRE) and 38–318 (SEPT…KKGH). Basic and acidic residues predominate over residues 7 to 20 (ILKEDSEVEREAPG). Over residues 50-59 (LHNTINTPQG) the composition is skewed to polar residues. S68 carries the phosphoserine; by host modification. Positions 83-101 (RSGEESRVSGRTSKPEAEA) are enriched in basic and acidic residues. A Phosphoserine; by host modification is found at S125. A compositionally biased stretch (basic and acidic residues) spans 150–168 (GIEDENREMAAHPDKRGED). Over residues 191–206 (ASNNGRSMEPGSSHSA) the composition is skewed to polar residues. 4 positions are modified to phosphoserine; by host: S192, S249, S257, and S260. Zn(2+) contacts are provided by H318, C337, C341, C353, C355, C358, C362, and C365.

This sequence belongs to the paramyxoviruses V protein family. In terms of assembly, interacts with host IFIH1/MDA5 and DHX58/LGP2. Interacts with host IRF3. Interacts with host RIGI regulatory protein (via CARDs domain) and host TRIM25 (via SPRY domain); these interactions prevent TRIM25-mediated ubiquitination of RIG-I and disrupts downstream RIG-I signaling.

The protein resides in the host cytoplasm. Plays an essential role in the inhibition of host immune response. Prevents the establishment of cellular antiviral state by blocking interferon-alpha/beta (IFN-alpha/beta) production and signaling pathway. Interacts with host IFIH1/MDA5 and DHX58/LGP2 to inhibit the transduction pathway involved in the activation of IFN-beta promoter, thus protecting the virus against cell antiviral state. Also interacts with and inhibits host IRF3. Blocks the type I interferon signaling pathway by disrupting the RIG-I signaling pathway. This chain is Protein V (P/V/C), found in Sendai virus (strain Harris) (SeV).